We begin with the raw amino-acid sequence, 178 residues long: Fucolectin-1 (178 aa).

Positions 1 to 20 are cleaved as a signal peptide; it reads MKVKTIMLLFQILAISTIKS. The segment at 29-178 is F5/8 type C-like; the sequence is QENVAVRGKA…VEVNALLPVN (150 aa). Ca(2+) contacts are provided by aspartate 59, asparagine 61, and serine 70. 3 disulfide bridges follow: cysteine 71-cysteine 167, cysteine 103-cysteine 104, and cysteine 129-cysteine 145. Alpha-L-fucose is bound by residues histidine 73 and arginine 100. Residues 100–102 carry the Cell attachment site motif; sequence RGD. Arginine 107 is a binding site for alpha-L-fucose. Ca(2+)-binding residues include cysteine 167 and glutamate 168.

This sequence belongs to the fucolectin family. As to quaternary structure, homotrimer. Parenchymal hepatocytes.

It is found in the secreted. The protein resides in the extracellular space. Acts as a defensive agent. Recognizes blood group fucosylated oligosaccharides including A, B, H and Lewis B-type antigens. Does not recognize Lewis A antigen and has low affinity for monovalent haptens. The protein is Fucolectin-1 of Anguilla japonica (Japanese eel).